Here is a 283-residue protein sequence, read N- to C-terminus: Alpha-ketoglutarate-dependent taurine dioxygenase (283 aa).

Taurine-binding residues include His70, Tyr73, and Asn95. Fe cation-binding residues include His99 and Asp101. Residue Val102 coordinates taurine. A 2-oxoglutarate-binding site is contributed by Thr126. 3-hydroxytryptophan; by autocatalysis occurs at positions 128, 240, and 248. His255 contributes to the Fe cation binding site. His255, Arg266, and Arg270 together coordinate 2-oxoglutarate. Arg270 lines the taurine pocket.

This sequence belongs to the TfdA dioxygenase family. As to quaternary structure, homodimer. Was later shown to be a homotetramer arranged as a dimer of two dimers. Fe(2+) serves as cofactor.

It carries out the reaction taurine + 2-oxoglutarate + O2 = aminoacetaldehyde + sulfite + succinate + CO2 + H(+). It participates in organosulfur degradation; taurine degradation via aerobic pathway; aminoacetaldehyde and sulfite from taurine: step 1/1. Its activity is regulated as follows. Activated by ascorbate and inhibited by divalent metal ions such as zinc, copper and cobalt. Catalyzes the alpha-ketoglutarate-dependent hydroxylation of taurine yielding sulfite and aminoacetaldehyde after decomposition of an unstable intermediate. Is required for the utilization of taurine (2-aminoethanesulfonate) as an alternative sulfur source for growth in the absence of sulfate. To a lesser extent, pentanesulfonate, 3-(N-morpholino)propanesulfonate and 1,3-dioxo-2-isoindolineethanesulfonate are also desulfonated by this enzyme in vitro; however, desulfonation by TauD of organosulfonates other than taurine seem to be of little or no importance for sulfur metabolism in vivo. In Escherichia coli (strain K12), this protein is Alpha-ketoglutarate-dependent taurine dioxygenase (tauD).